A 73-amino-acid polypeptide reads, in one-letter code: Kappa-scoloptoxin(03)-Ssm1c (73 aa).

Positions 1–23 are cleaved as a signal peptide; it reads MKSWMAILLVMALIIFTLDNCYS. Intrachain disulfides connect Cys32–Cys58, Cys41–Cys57, and Cys44–Cys67.

The protein belongs to the scoloptoxin family. As to expression, expressed by the venom gland.

The protein resides in the secreted. Its function is as follows. Inhibits voltage-gated potassium channels. This Scolopendra mutilans (Chinese red-headed centipede) protein is Kappa-scoloptoxin(03)-Ssm1c.